The following is a 522-amino-acid chain: N-acetylgalactosamine-6-sulfatase (522 aa).

An N-terminal signal peptide occupies residues 1–25 (MAAVAAATRWHLLLVLSAAGLGVTG). The interval 27–379 (PQPPNILLLL…PAMLQGRLTE (353 aa)) is catalytic domain. Ca(2+)-binding residues include aspartate 38, aspartate 39, and cysteine 78. The Nucleophile role is filled by cysteine 78. Position 78 is a 3-oxoalanine (Cys) (cysteine 78). The active site involves histidine 141. Asparagine 203 is a glycosylation site (N-linked (GlcNAc...) asparagine). Positions 288 and 289 each coordinate Ca(2+). Cysteine 308 and cysteine 419 are oxidised to a cystine. N-linked (GlcNAc...) asparagine glycosylation is present at asparagine 423. Intrachain disulfides connect cysteine 489–cysteine 518 and cysteine 501–cysteine 507.

It belongs to the sulfatase family. In terms of assembly, homodimer. Ca(2+) serves as cofactor. Post-translationally, the conversion to 3-oxoalanine (also known as C-formylglycine, FGly), of a serine or cysteine residue in prokaryotes and of a cysteine residue in eukaryotes, is critical for catalytic activity.

The protein localises to the lysosome. It carries out the reaction Hydrolysis of the 6-sulfate groups of the N-acetyl-D-galactosamine 6-sulfate units of chondroitin sulfate and of the D-galactose 6-sulfate units of keratan sulfate.. The sequence is that of N-acetylgalactosamine-6-sulfatase (GALNS) from Sus scrofa (Pig).